The following is an 863-amino-acid chain: Glycerol-3-phosphate acyltransferase (863 aa).

A disordered region spans residues 1-29 (MPKKNSPLLPKETTTTQSSVDTSGSSNLT). Residues 12-29 (ETTTTQSSVDTSGSSNLT) are compositionally biased toward polar residues. An HXXXXD motif motif is present at residues 343–348 (SHRSHI).

Belongs to the GPAT/DAPAT family.

Its subcellular location is the cell inner membrane. The enzyme catalyses sn-glycerol 3-phosphate + an acyl-CoA = a 1-acyl-sn-glycero-3-phosphate + CoA. It participates in phospholipid metabolism; CDP-diacylglycerol biosynthesis; CDP-diacylglycerol from sn-glycerol 3-phosphate: step 1/3. This chain is Glycerol-3-phosphate acyltransferase, found in Xylella fastidiosa (strain M12).